Reading from the N-terminus, the 218-residue chain is N-(5'-phosphoribosyl)anthranilate isomerase (218 aa).

The protein belongs to the TrpF family.

It catalyses the reaction N-(5-phospho-beta-D-ribosyl)anthranilate = 1-(2-carboxyphenylamino)-1-deoxy-D-ribulose 5-phosphate. Its pathway is amino-acid biosynthesis; L-tryptophan biosynthesis; L-tryptophan from chorismate: step 3/5. The sequence is that of N-(5'-phosphoribosyl)anthranilate isomerase from Halobacterium salinarum (strain ATCC 29341 / DSM 671 / R1).